The chain runs to 792 residues: Phenylalanine--tRNA ligase beta subunit (792 aa).

The region spanning 39 to 147 is the tRNA-binding domain; that stretch reads GESLGQVVVA…DDAPVGQALA (109 aa). The 76-residue stretch at 400-475 folds into the B5 domain; sequence PQPARILLRR…RIHGYDRVPT (76 aa). D453, D459, E462, and D463 together coordinate Mg(2+). The 94-residue stretch at 698–791 folds into the FDX-ACB domain; that stretch reads SRFPSVRRDL…IEREHRARIR (94 aa).

Belongs to the phenylalanyl-tRNA synthetase beta subunit family. Type 1 subfamily. Tetramer of two alpha and two beta subunits. Mg(2+) is required as a cofactor.

It is found in the cytoplasm. The enzyme catalyses tRNA(Phe) + L-phenylalanine + ATP = L-phenylalanyl-tRNA(Phe) + AMP + diphosphate + H(+). The protein is Phenylalanine--tRNA ligase beta subunit of Xanthomonas oryzae pv. oryzae (strain MAFF 311018).